Here is a 286-residue protein sequence, read N- to C-terminus: Lipoyl synthase (286 aa).

Residues cysteine 29, cysteine 34, cysteine 40, cysteine 55, cysteine 59, cysteine 62, and serine 265 each contribute to the [4Fe-4S] cluster site. Residues 41-254 (WGSGTATFMI…EKIAYSLGFS (214 aa)) enclose the Radical SAM core domain.

This sequence belongs to the radical SAM superfamily. Lipoyl synthase family. The cofactor is [4Fe-4S] cluster.

It localises to the cytoplasm. It carries out the reaction [[Fe-S] cluster scaffold protein carrying a second [4Fe-4S](2+) cluster] + N(6)-octanoyl-L-lysyl-[protein] + 2 oxidized [2Fe-2S]-[ferredoxin] + 2 S-adenosyl-L-methionine + 4 H(+) = [[Fe-S] cluster scaffold protein] + N(6)-[(R)-dihydrolipoyl]-L-lysyl-[protein] + 4 Fe(3+) + 2 hydrogen sulfide + 2 5'-deoxyadenosine + 2 L-methionine + 2 reduced [2Fe-2S]-[ferredoxin]. The protein operates within protein modification; protein lipoylation via endogenous pathway; protein N(6)-(lipoyl)lysine from octanoyl-[acyl-carrier-protein]: step 2/2. In terms of biological role, catalyzes the radical-mediated insertion of two sulfur atoms into the C-6 and C-8 positions of the octanoyl moiety bound to the lipoyl domains of lipoate-dependent enzymes, thereby converting the octanoylated domains into lipoylated derivatives. This chain is Lipoyl synthase, found in Sulfolobus acidocaldarius (strain ATCC 33909 / DSM 639 / JCM 8929 / NBRC 15157 / NCIMB 11770).